The following is a 372-amino-acid chain: Putative aminopeptidase SgcX (372 aa).

Positions 67 and 180 each coordinate a divalent metal cation. Catalysis depends on glutamate 212, which acts as the Proton acceptor. A divalent metal cation is bound by residues glutamate 213, aspartate 235, and histidine 329.

This sequence belongs to the peptidase M42 family. Requires a divalent metal cation as cofactor.

The chain is Putative aminopeptidase SgcX (sgcX) from Salmonella typhi.